The sequence spans 204 residues: Large ribosomal subunit protein uL4 (204 aa).

Residues 49–75 are disordered; the sequence is TKGRSEVSGGGKKPWRQKGRGGARAGS.

The protein belongs to the universal ribosomal protein uL4 family. As to quaternary structure, part of the 50S ribosomal subunit.

Functionally, one of the primary rRNA binding proteins, this protein initially binds near the 5'-end of the 23S rRNA. It is important during the early stages of 50S assembly. It makes multiple contacts with different domains of the 23S rRNA in the assembled 50S subunit and ribosome. Its function is as follows. Forms part of the polypeptide exit tunnel. The sequence is that of Large ribosomal subunit protein uL4 from Campylobacter hominis (strain ATCC BAA-381 / DSM 21671 / CCUG 45161 / LMG 19568 / NCTC 13146 / CH001A).